A 448-amino-acid chain; its full sequence is Exodeoxyribonuclease 7 large subunit (448 aa).

The protein belongs to the XseA family. As to quaternary structure, heterooligomer composed of large and small subunits.

It is found in the cytoplasm. The catalysed reaction is Exonucleolytic cleavage in either 5'- to 3'- or 3'- to 5'-direction to yield nucleoside 5'-phosphates.. Functionally, bidirectionally degrades single-stranded DNA into large acid-insoluble oligonucleotides, which are then degraded further into small acid-soluble oligonucleotides. This chain is Exodeoxyribonuclease 7 large subunit, found in Shewanella baltica (strain OS223).